The sequence spans 412 residues: Aspartate kinase Ask_LysC (412 aa).

Positions L265–R332 constitute an ACT domain.

The protein belongs to the aspartokinase family.

The protein localises to the cytoplasm. It carries out the reaction L-aspartate + ATP = 4-phospho-L-aspartate + ADP. It participates in amino-acid biosynthesis; L-lysine biosynthesis via DAP pathway; (S)-tetrahydrodipicolinate from L-aspartate: step 1/4. It functions in the pathway amino-acid biosynthesis; L-methionine biosynthesis via de novo pathway; L-homoserine from L-aspartate: step 1/3. Its pathway is amino-acid biosynthesis; L-threonine biosynthesis; L-threonine from L-aspartate: step 1/5. Its activity is regulated as follows. Allosterically and strongly feedback inhibited by tryptophan. Addition of lysine alone slightly enhances activity. The simultaneous addition of lysine and tryptophan leads to very strong feedback inhibition of the enzyme. The feedback control by tryptophan is reduced in the presence of the compatible solutes hydroxyectoine or ectoine. Involved in the biosynthesis of L-aspartate-beta-semialdehyde which is a central intermediate in the biosynthesis of different amino acids (L-lysine, L-methionine, L-threonine). Catalyzes the phosphorylation of the beta-carboxyl group of L-aspartate to yield 4-phospho-L-aspartate. The chain is Aspartate kinase Ask_LysC (lysC) from Stutzerimonas stutzeri (strain A1501) (Pseudomonas stutzeri).